The sequence spans 369 residues: Isocitrate dehydrogenase [NAD] subunit 2, mitochondrial (369 aa).

Residues 1–15 (MLRNTFFRNTSRRFL) constitute a mitochondrion transit peptide. The residue at position 105 (threonine 105) is a Phosphothreonine. Residues arginine 119, arginine 129, and arginine 150 each coordinate substrate. Position 153 is a phosphothreonine (threonine 153). Aspartate 237 is a substrate binding site. Mg(2+) contacts are provided by aspartate 237, aspartate 263, and aspartate 267. Phosphothreonine occurs at positions 327 and 349.

Belongs to the isocitrate and isopropylmalate dehydrogenases family. As to quaternary structure, octamer of two non-identical subunits IDH1 and IDH2. The cofactor is Mg(2+). It depends on Mn(2+) as a cofactor.

The protein resides in the mitochondrion matrix. It carries out the reaction D-threo-isocitrate + NAD(+) = 2-oxoglutarate + CO2 + NADH. With respect to regulation, allosterically regulated by several compounds including AMP, NAD(+), and citrate. Performs an essential role in the oxidative function of the citric acid cycle. Also binds RNA; specifically to the 5'-untranslated leaders of mitochondrial mRNAs. The chain is Isocitrate dehydrogenase [NAD] subunit 2, mitochondrial (IDH2) from Saccharomyces cerevisiae (strain ATCC 204508 / S288c) (Baker's yeast).